A 457-amino-acid polypeptide reads, in one-letter code: Siroheme synthase (457 aa).

Residues 1-204 are precorrin-2 dehydrogenase /sirohydrochlorin ferrochelatase; that stretch reads MDHLPIFCQL…QDQQAVEETT (204 aa). NAD(+) is bound by residues 22–23 and 43–44; these read DV and LA. At Ser-128 the chain carries Phosphoserine. Residues 216 to 457 form a uroporphyrinogen-III C-methyltransferase region; sequence GEVVLVGAGP…REKLNWFSNH (242 aa). Pro-225 lines the S-adenosyl-L-methionine pocket. Residue Asp-248 is the Proton acceptor of the active site. Lys-270 acts as the Proton donor in catalysis. Residues 301 to 303, Ile-306, 331 to 332, Met-382, and Gly-411 contribute to the S-adenosyl-L-methionine site; these read GGD and TA.

The protein in the N-terminal section; belongs to the precorrin-2 dehydrogenase / sirohydrochlorin ferrochelatase family. It in the C-terminal section; belongs to the precorrin methyltransferase family.

The catalysed reaction is uroporphyrinogen III + 2 S-adenosyl-L-methionine = precorrin-2 + 2 S-adenosyl-L-homocysteine + H(+). It carries out the reaction precorrin-2 + NAD(+) = sirohydrochlorin + NADH + 2 H(+). It catalyses the reaction siroheme + 2 H(+) = sirohydrochlorin + Fe(2+). Its pathway is cofactor biosynthesis; adenosylcobalamin biosynthesis; precorrin-2 from uroporphyrinogen III: step 1/1. It functions in the pathway cofactor biosynthesis; adenosylcobalamin biosynthesis; sirohydrochlorin from precorrin-2: step 1/1. It participates in porphyrin-containing compound metabolism; siroheme biosynthesis; precorrin-2 from uroporphyrinogen III: step 1/1. The protein operates within porphyrin-containing compound metabolism; siroheme biosynthesis; siroheme from sirohydrochlorin: step 1/1. Its pathway is porphyrin-containing compound metabolism; siroheme biosynthesis; sirohydrochlorin from precorrin-2: step 1/1. Its function is as follows. Multifunctional enzyme that catalyzes the SAM-dependent methylations of uroporphyrinogen III at position C-2 and C-7 to form precorrin-2 via precorrin-1. Then it catalyzes the NAD-dependent ring dehydrogenation of precorrin-2 to yield sirohydrochlorin. Finally, it catalyzes the ferrochelation of sirohydrochlorin to yield siroheme. This chain is Siroheme synthase, found in Enterobacter sp. (strain 638).